The chain runs to 179 residues: Large ribosomal subunit protein uL5 (179 aa).

It belongs to the universal ribosomal protein uL5 family. As to quaternary structure, part of the 50S ribosomal subunit; part of the 5S rRNA/L5/L18/L25 subcomplex. Contacts the 5S rRNA and the P site tRNA. Forms a bridge to the 30S subunit in the 70S ribosome.

Functionally, this is one of the proteins that bind and probably mediate the attachment of the 5S RNA into the large ribosomal subunit, where it forms part of the central protuberance. In the 70S ribosome it contacts protein S13 of the 30S subunit (bridge B1b), connecting the 2 subunits; this bridge is implicated in subunit movement. Contacts the P site tRNA; the 5S rRNA and some of its associated proteins might help stabilize positioning of ribosome-bound tRNAs. The protein is Large ribosomal subunit protein uL5 of Clostridium botulinum (strain Alaska E43 / Type E3).